We begin with the raw amino-acid sequence, 202 residues long: ATP-dependent Clp protease proteolytic subunit (202 aa).

Ser-101 serves as the catalytic Nucleophile. The active site involves His-126.

It belongs to the peptidase S14 family. In terms of assembly, component of the chloroplastic Clp protease core complex.

The protein localises to the plastid. Its subcellular location is the chloroplast stroma. The enzyme catalyses Hydrolysis of proteins to small peptides in the presence of ATP and magnesium. alpha-casein is the usual test substrate. In the absence of ATP, only oligopeptides shorter than five residues are hydrolyzed (such as succinyl-Leu-Tyr-|-NHMec, and Leu-Tyr-Leu-|-Tyr-Trp, in which cleavage of the -Tyr-|-Leu- and -Tyr-|-Trp bonds also occurs).. Cleaves peptides in various proteins in a process that requires ATP hydrolysis. Has a chymotrypsin-like activity. Plays a major role in the degradation of misfolded proteins. This chain is ATP-dependent Clp protease proteolytic subunit, found in Nuphar advena (Common spatterdock).